Reading from the N-terminus, the 344-residue chain is Methionine import ATP-binding protein MetN 1 (344 aa).

Residues 2–241 form the ABC transporter domain; it reads IELRNLSQRF…PHHEVTRALI (240 aa). ATP is bound at residue 38 to 45; sequence GRSGAGKS.

The protein belongs to the ABC transporter superfamily. Methionine importer (TC 3.A.1.24) family. In terms of assembly, the complex is composed of two ATP-binding proteins (MetN), two transmembrane proteins (MetI) and a solute-binding protein (MetQ).

Its subcellular location is the cell inner membrane. It carries out the reaction L-methionine(out) + ATP + H2O = L-methionine(in) + ADP + phosphate + H(+). It catalyses the reaction D-methionine(out) + ATP + H2O = D-methionine(in) + ADP + phosphate + H(+). In terms of biological role, part of the ABC transporter complex MetNIQ involved in methionine import. Responsible for energy coupling to the transport system. This Burkholderia lata (strain ATCC 17760 / DSM 23089 / LMG 22485 / NCIMB 9086 / R18194 / 383) protein is Methionine import ATP-binding protein MetN 1.